Reading from the N-terminus, the 431-residue chain is Glutamate-1-semialdehyde 2,1-aminomutase (431 aa).

K265 carries the N6-(pyridoxal phosphate)lysine modification.

This sequence belongs to the class-III pyridoxal-phosphate-dependent aminotransferase family. HemL subfamily. In terms of assembly, homodimer. Pyridoxal 5'-phosphate serves as cofactor.

It localises to the cytoplasm. The enzyme catalyses (S)-4-amino-5-oxopentanoate = 5-aminolevulinate. Its pathway is porphyrin-containing compound metabolism; protoporphyrin-IX biosynthesis; 5-aminolevulinate from L-glutamyl-tRNA(Glu): step 2/2. In Vibrio campbellii (strain ATCC BAA-1116), this protein is Glutamate-1-semialdehyde 2,1-aminomutase.